Here is a 537-residue protein sequence, read N- to C-terminus: Multidrug resistance protein Stp (537 aa).

A run of 14 helical transmembrane segments spans residues 6-26, 46-66, 77-97, 104-124, 136-156, 163-183, 200-220, 223-243, 262-282, 300-320, 327-347, 352-372, 397-417, and 478-498; these read LLTL…ALIV, WVVA…ATLA, IGVS…SIAV, AQGL…SAAF, IWTA…GLLV, SIFY…LCYV, LLFI…PQIG, SVQT…FVWL, YALA…MLLL, LMIL…GHLV, VPIL…IFSE, ALVL…LTPI, AIGS…WLSA, and VALL…WRWF.

It belongs to the major facilitator superfamily. EmrB family.

The protein localises to the cell membrane. Its function is as follows. Contributes to spectinomycin and tetracycline resistance. The chain is Multidrug resistance protein Stp (stp) from Mycobacterium tuberculosis (strain ATCC 25618 / H37Rv).